Reading from the N-terminus, the 247-residue chain is tRNA (guanine-N(1)-)-methyltransferase (247 aa).

S-adenosyl-L-methionine-binding positions include glycine 115 and 134–139 (IGDFVL).

This sequence belongs to the RNA methyltransferase TrmD family. As to quaternary structure, homodimer.

It localises to the cytoplasm. The catalysed reaction is guanosine(37) in tRNA + S-adenosyl-L-methionine = N(1)-methylguanosine(37) in tRNA + S-adenosyl-L-homocysteine + H(+). Functionally, specifically methylates guanosine-37 in various tRNAs. This is tRNA (guanine-N(1)-)-methyltransferase from Anaeromyxobacter dehalogenans (strain 2CP-C).